We begin with the raw amino-acid sequence, 573 residues long: PCNA-interacting partner (573 aa).

The disordered stretch occupies residues 463 to 511; it reads VSEGAQPSVGKARLETSSENVHVDRSKDDKGPRKSTKRKLAKSKQPGVR. A compositionally biased stretch (basic and acidic residues) spans 474–494; the sequence is ARLETSSENVHVDRSKDDKGP. Positions 495-504 are enriched in basic residues; that stretch reads RKSTKRKLAK.

It belongs to the PARI family. Interacts with RAD51 and PCNA. Interacts with PARP1. Interacts with TASOR. In terms of tissue distribution, present in testis (at protein level). Expressed in testis, gastrointestinal tract (jejunum, ileum, and colon) and immune system (thymus and spleen). Weakly expressed in lung, kidney, pituitary gland and muscle.

Its subcellular location is the cytoplasm. The protein resides in the nucleus. Required to suppress inappropriate homologous recombination, thereby playing a central role DNA repair and in the maintenance of genomic stability. Antagonizes homologous recombination by interfering with the formation of the RAD51-DNA homologous recombination structure. Positively regulate the poly(ADP-ribosyl)ation activity of PARP1; however such function may be indirect. Binds single-strand DNA and poly(A) homopolymers. The polypeptide is PCNA-interacting partner (Parpbp) (Rattus norvegicus (Rat)).